Here is a 129-residue protein sequence, read N- to C-terminus: Large ribosomal subunit protein eL31 (129 aa).

Positions 1–46 (MSQETTATKQEEQKTSELQQQKKEEQKPQQATTTTKEEKKTKPEKE) are disordered. Composition is skewed to basic and acidic residues over residues 9–27 (KQEE…EEQK) and 35–46 (TKEEKKTKPEKE).

It belongs to the eukaryotic ribosomal protein eL31 family.

This chain is Large ribosomal subunit protein eL31 (rpl31e), found in Sulfolobus acidocaldarius (strain ATCC 33909 / DSM 639 / JCM 8929 / NBRC 15157 / NCIMB 11770).